The following is a 278-amino-acid chain: Ras-related protein Rab-40B (278 aa).

Residues S23, G26, and K27 each coordinate GTP. The switch-I stretch occupies residues 41 to 49 (SPYGHPAGI). Residue D69 coordinates Mg(2+). GTP-binding residues include G72, N126, and R127. Residues 72-88 (GQGRFCTIFRSYSRGAQ) form a switch-II region. Residues 175–228 (LLRHGMDRLWRPSKVLSLQELCCRAVVSCTPGHLVDKLPLPVALRSHLKSFSMA) form the SOCS box domain. A disordered region spans residues 245 to 278 (ANSSHKRNSFRKVRTIRPPQSPPRNCARNSCKIS). Positions 248-259 (SHKRNSFRKVRT) are enriched in basic residues. A lipid anchor (S-palmitoyl cysteine) is attached at C270. Residue C275 is the site of S-geranylgeranyl cysteine attachment.

This sequence belongs to the small GTPase superfamily. Rab family. As to quaternary structure, component of the cullin-5-RING E3 ubiquitin-protein ligase complex (ECS(RAB40B) complex) composed of CUL5, Elongin BC (ELOB and ELOC), RNF7/RBX2 and RAB40B; RAB40B interaction with ECS complex is GTP-independent. Binds (GTP-bound) LIMA1; interaction promotes LIMA1 subcellular localization in lamellipodia during cell migration. Interacts (GTP-bound) with TKS5/SH3PXD2A (via PX domain); interaction promotes invadopodia-mediated extracellular matrix degradation. Mg(2+) serves as cofactor.

Its subcellular location is the cell membrane. The protein localises to the cytoplasm. It is found in the cytosol. It localises to the cell projection. The protein resides in the lamellipodium membrane. Its subcellular location is the ruffle. The enzyme catalyses GTP + H2O = GDP + phosphate + H(+). The protein operates within protein modification; protein ubiquitination. With respect to regulation, regulated by guanine nucleotide exchange factors (GEFs) which promote the exchange of bound GDP for free GTP. Regulated by GTPase activating proteins (GAPs) which increase the GTP hydrolysis activity. Inhibited by GDP dissociation inhibitors (GDIs). Functionally, RAB40B small GTPase acts as substrate-recognition components of the ECS(RAB40B) E3 ubiquitin ligase complex which mediates the ubiquitination of target proteins. The Rab40 subfamily belongs to the Rab family that are key regulators of intracellular membrane trafficking, from the formation of transport vesicles to their fusion with membranes. Rabs cycle between an inactive GDP-bound form and an active GTP-bound form that is able to recruit to membranes different sets of downstream effectors directly responsible for vesicle formation, movement, tethering and fusion. As part of the ECS(RAB40B) complex, GTP-bound RAB40B promotes LIMA1/EPLIN ubiquitination and degradation, thereby regulating leading-edge actin dynamics during cell migration. As part of the ECS(RAB40B) complex, GTP-bound RAB40B also ubiquitinates RAP2A GTPase which promotes its localization to lamellipodia and activation to drive cell migration. The ECS(RAB40B) complex does not mediate canonical ubiquitin-dependent degradation of RAP2. RAB40B also binds TKS5/SH3PXD2A effector independently from ECS complex to promote invadopodia-mediated extracellular matrix degradation. The polypeptide is Ras-related protein Rab-40B (Mus musculus (Mouse)).